The sequence spans 351 residues: GTPase Obg (351 aa).

An Obg domain is found at 1-159 (MKFLDQCKIY…RWVWLRLKLI (159 aa)). The region spanning 160–327 (ADAGLVGLPN…MLFELLRHIR (168 aa)) is the OBG-type G domain. Residues 166–173 (GLPNAGKS), 191–195 (FTTLT), 212–215 (DIPG), 279–282 (NKID), and 308–310 (SGA) each bind GTP. Mg(2+) is bound by residues Ser173 and Thr193.

It belongs to the TRAFAC class OBG-HflX-like GTPase superfamily. OBG GTPase family. In terms of assembly, monomer. It depends on Mg(2+) as a cofactor.

It localises to the cytoplasm. Its function is as follows. An essential GTPase which binds GTP, GDP and possibly (p)ppGpp with moderate affinity, with high nucleotide exchange rates and a fairly low GTP hydrolysis rate. Plays a role in control of the cell cycle, stress response, ribosome biogenesis and in those bacteria that undergo differentiation, in morphogenesis control. This is GTPase Obg from Rhodospirillum centenum (strain ATCC 51521 / SW).